We begin with the raw amino-acid sequence, 349 residues long: DCD domain-containing protein NRP (349 aa).

The disordered stretch occupies residues 157-201 (NNNKNKGIDEDHQIQKGGKKNRKNQQNNNNQRNEDDKNNGLDKRF). Basic and acidic residues predominate over residues 188–201 (RNEDDKNNGLDKRF). The 133-residue stretch at 214–346 (ETIGGYIFVC…VLSLLDIFAD (133 aa)) folds into the DCD domain.

As to quaternary structure, interacts with CRY2 in the cytoplasm. Interacts with Verticillium dahliae PevD1. Interacts with FYPP3. Highly expressed in sensecent leaves, cauline leaves and sepals. Expressed in the shoot apical meristem, leaf veins, central cylinder, root hair zone, root tips, rosette leaves, flowers and siliques.

It localises to the cytoplasm. Functionally, contributes to the initial phase of responses to abiotic and biotic stress signals. Binds FYPP3 and facilitates FYPP3 degradation to promote abscisic acid (ABA) response. This chain is DCD domain-containing protein NRP, found in Arabidopsis thaliana (Mouse-ear cress).